The chain runs to 286 residues: Perivitellin-2 31 kDa subunit (286 aa).

The signal sequence occupies residues 1–30 (MVKKIHFVMERHASIVAFLLAVLALTESQA). N-linked (GlcNAc...) asparagine glycosylation occurs at Asn-101.

This sequence belongs to the tectonin family. In terms of assembly, perivitellin-2 is a dimer of heterodimers held together head-to-tail by non-covalent forces. The heterodimer is composed of the tachylectin subunit (31 kDa) and the MACPF subunit (67 kDa) that are disulfide-linked. PV2 is a very high density lipoprotein (VHDL). It contains 3.75% of lipids. The major lipid classes are free sterols and phospholipids and also have significant quantities of energy-providing triacylglycerides and free fatty acids. As to expression, produced by albumen secretory cells. Found in developing eggs.

It localises to the secreted. The protein resides in the target cell membrane. The egg defensive protein perivitellin-2 is a pore-forming two-subunit glycoprotein that affects both the nervous and digestive systems of mammals. In addition, it is a source of both structural and energetic molecules during embryonic development. The tachylectin subunit (31 kDa) binds target membranes while the MACPF subunit (67 kDa) disrupts lipid bilayers forming large pores (inner diameter of about 5.6 nm) altering the plasma membrance conductance. Both in vivo and in vitro, the protein shows wide pH range stability and is resistant to enzymatic proteolysis from gastrointestinal environments. It is cytotoxic to both epithelial and immune cells from the digestive system of mammals. It induces enterocyte death by a lytic mechanism and disrupts enterocyte monolayers in a dose-dependent manner. After oral administration to mice, it binds enterocytes and induces large dose-dependent morphological changes on their small intestine mucosa, reducing the absorptive surface. Additionally, it is detected in the Peyer's patches where it activates lymphoid follicles and triggers apoptosis. The toxin can also traverse the intestinal barrier and induce oral adaptive immunity with evidence of circulating antibody response. The toxin also shows hemagglutination properties thanks to the tachylectin subunit, but has no hemolytic activity. In addition to enterotoxin activity, the toxin also acts as a neurotoxin, since an intraperitoneal injection can induce paralysis of the mice rear limbs, followed by death. The protein is Perivitellin-2 31 kDa subunit of Pomacea maculata (Giant applesnail).